Here is a 229-residue protein sequence, read N- to C-terminus: uncharacterized protein (229 aa).

A signal peptide spans 1–17 (MKKIIALMLFLTFFAHA).

This is an uncharacterized protein from Escherichia coli O157:H7.